The primary structure comprises 115 residues: T cell receptor delta variable 2 (115 aa).

A signal peptide spans 1–19 (MQRISSLIHLSLFWAGVMS). Positions 25–115 (PEHQTVPVSI…EGSYYCACDT (91 aa)) constitute an Ig-like domain. Cys42 and Cys111 form a disulfide bridge.

As to quaternary structure, gamma-delta TR is a heterodimer composed of a gamma and delta chain; disulfide-linked. The gamma-delta TR is associated with the transmembrane signaling CD3 coreceptor proteins following the stoichiometry: a single gamma-delta TR heterodimer associates with one CD3D-CD3E heterodimer, one CD3G-CD3E heterodimer and one CD247 homodimer forming a stable octameric structure. Upon activation, gamma-delta TR complex associates with FCER1G to initiate intracellular signaling.

It localises to the cell membrane. Its function is as follows. V region of the variable domain of T cell receptor (TR) delta chain that participates in the antigen recognition. Gamma-delta TRs recognize a variety of self and foreign non-peptide antigens frequently expressed at the epithelial boundaries between the host and external environment, including endogenous lipids presented by MH-like protein CD1D and phosphoantigens presented by butyrophilin-like molecule BTN3A1. Upon antigen recognition induces rapid, innate-like immune responses involved in pathogen clearance and tissue repair. Binding of gamma-delta TR complex to antigen triggers phosphorylation of immunoreceptor tyrosine-based activation motifs (ITAMs) in the CD3 chains by the LCK and FYN kinases, allowing the recruitment, phosphorylation, and activation of ZAP70 that facilitates phosphorylation of the scaffolding proteins LCP2 and LAT. This lead to the formation of a supramolecular signalosome that recruits the phospholipase PLCG1, resulting in calcium mobilization and ERK activation, ultimately leading to T cell expansion and differentiation into effector cells. Gamma-delta TRs are produced through somatic rearrangement of a limited repertoire of variable (V), diversity (D), and joining (J) genes. The potential diversity of gamma-delta TRs is conferred by the unique ability to rearrange (D) genes in tandem and to utilize all three reading frames. The combinatorial diversity is considerably increased by the sequence exonuclease trimming and random nucleotide (N) region additions which occur during the V-(D)-J rearrangements. In Homo sapiens (Human), this protein is T cell receptor delta variable 2.